The following is a 317-amino-acid chain: MAASVTRVLKGAGGRQLLLMVARRRPVLMQPFLLMPRKFWVSSALRSEDQRQPPFSASSTHAETQGHAEEQYQQKQPPPRYTDQAGEESEGYESEEQLQQQILSAALQFVPDFGWSADAIAEGAKSLDMSAAAAGMFEDGGSELILHFVTQCNLQLTELLEKEQKLVQLGTSEKKPTAQFLRDAVEARLRMHIPYIEHWPQALGMLLLPRNIPSSLKLLTAMVDDIWHYAGDQSTDVSWYTRRAVLTGIYNTTELVMLQDSSPDFEDTWKFLENRISEAMTMGDSVKQVASTGEAVIQGLMGAAVTLKNLTGLNQRR.

The N-terminal 46 residues, 1–46 (MAASVTRVLKGAGGRQLLLMVARRRPVLMQPFLLMPRKFWVSSALR), are a transit peptide targeting the mitochondrion. A disordered region spans residues 50–97 (QRQPPFSASSTHAETQGHAEEQYQQKQPPPRYTDQAGEESEGYESEEQ). Positions 53–63 (PPFSASSTHAE) are enriched in polar residues. Over residues 85–96 (AGEESEGYESEE) the composition is skewed to acidic residues. Arg243 provides a ligand contact to a 1,2-diacylglycero-3-phosphoethanolamine.

This sequence belongs to the COQ9 family. As to quaternary structure, homodimer. Heterodimer; two heterodimers of COQ7:COQ9 come together on the same side of the lipid pseudo-bilayer and form a curved tetramer with a hydrophobic surface suitable for membrane interaction. These two tetramers assemble into a soluble octamer with a pseudo-bilayer of lipids captured within. Interacts with COQ7; this interaction allows ubiquinone (CoQ) isoprene intermediates presentation to COQ7 and facilitates the COQ7-mediated hydroxylase step.

The protein localises to the mitochondrion. Its pathway is cofactor biosynthesis; ubiquinone biosynthesis. Membrane-associated protein that warps the membrane surface to access and bind aromatic isoprenes with high specificity, including ubiquinone (CoQ) isoprene intermediates and presents them directly to COQ7, therefore facilitating the COQ7-mediated hydroxylase step. Participates in the biosynthesis of coenzyme Q, also named ubiquinone, an essential lipid-soluble electron transporter for aerobic cellular respiration. In Xenopus laevis (African clawed frog), this protein is Ubiquinone biosynthesis protein COQ9-A, mitochondrial (coq9-a).